A 184-amino-acid chain; its full sequence is MKIAQEIRAGNVIMQGKDPMIVLKTEYARGGRGAATVRMKLKALLSNMGTEVVFKADDKIDNVILDKKECTYSYFADPMYVWMDAEYNQYEVEASNMGDAISYLEDGMAAEVVFYDGKAISVELPTSVEREITWTEPAVKGDTSGKVLKPAKIATGFEVAVPLFVDQGDKIEIDTRTGEYRKRV.

The protein belongs to the elongation factor P family.

The protein localises to the cytoplasm. It functions in the pathway protein biosynthesis; polypeptide chain elongation. Its function is as follows. Involved in peptide bond synthesis. Stimulates efficient translation and peptide-bond synthesis on native or reconstituted 70S ribosomes in vitro. Probably functions indirectly by altering the affinity of the ribosome for aminoacyl-tRNA, thus increasing their reactivity as acceptors for peptidyl transferase. This Acidovorax ebreus (strain TPSY) (Diaphorobacter sp. (strain TPSY)) protein is Elongation factor P.